Reading from the N-terminus, the 237-residue chain is N-(5'-phosphoribosyl)anthranilate isomerase (237 aa).

This sequence belongs to the TrpF family.

The catalysed reaction is N-(5-phospho-beta-D-ribosyl)anthranilate = 1-(2-carboxyphenylamino)-1-deoxy-D-ribulose 5-phosphate. Its pathway is amino-acid biosynthesis; L-tryptophan biosynthesis; L-tryptophan from chorismate: step 3/5. This chain is N-(5'-phosphoribosyl)anthranilate isomerase, found in Desulfitobacterium hafniense (strain Y51).